The following is a 184-amino-acid chain: NADH-quinone oxidoreductase subunit B (184 aa).

Positions 37, 38, 103, and 132 each coordinate [4Fe-4S] cluster.

Belongs to the complex I 20 kDa subunit family. NDH-1 is composed of 14 different subunits. Subunits NuoB, C, D, E, F, and G constitute the peripheral sector of the complex. The cofactor is [4Fe-4S] cluster.

It is found in the cell membrane. The enzyme catalyses a quinone + NADH + 5 H(+)(in) = a quinol + NAD(+) + 4 H(+)(out). NDH-1 shuttles electrons from NADH, via FMN and iron-sulfur (Fe-S) centers, to quinones in the respiratory chain. The immediate electron acceptor for the enzyme in this species is believed to be a menaquinone. Couples the redox reaction to proton translocation (for every two electrons transferred, four hydrogen ions are translocated across the cytoplasmic membrane), and thus conserves the redox energy in a proton gradient. This Mycobacterium bovis (strain BCG / Pasteur 1173P2) protein is NADH-quinone oxidoreductase subunit B.